Consider the following 451-residue polypeptide: Protein naked cuticle homolog 2 (451 aa).

Residues 1 to 108 (MGKLQSKHAA…PRGPGGQRLN (108 aa)) are disordered. Gly2 carries the N-myristoyl glycine lipid modification. Residues 2–173 (GKLQSKHAAA…GSSKTLRVKL (172 aa)) form a targeting to the basolateral cell membrane region. 2 stretches are compositionally biased toward basic and acidic residues: residues 34-63 (KGAE…REDQ) and 89-99 (DGERAANREGP). Residues 113–178 (QCDVSVEEDD…LRVKLTVSPE (66 aa)) are interaction with DVL1, DVL2 and DVL3. The EF-hand domain occupies 119–154 (EEDDRQEWTFTLYDFDNCGKVTREDMSSLMHTIYEV). Ca(2+) contacts are provided by Asp132, Asp134, Lys138, and Asp143. Disordered stretches follow at residues 162–237 (SSGS…PYCV) and 256–408 (YTSR…TVEH). Positions 180–215 (SSKRKEGPPAGQDREPTRCRMEGELAEEPRVADRRL) are enriched in basic and acidic residues. The segment at 300–385 (QVLVEHVVPA…PPPPYGHKRY (86 aa)) is interaction with TGFA. The segment covering 332–351 (KSPKGSGKPPGVPASSKSGK) has biased composition (low complexity).

This sequence belongs to the NKD family. In terms of assembly, interacts with DVL1, DVL2, DVL3 and PPP2R3A. Interacts with RNF25 and TGFA (via cytoplasmic domain). Post-translationally, ubiquitinated, leading to rapid proteasomal degradation. Interaction with TGFA interferes with RNF25 binding and protects against ubiquitination mediated by RNF25. As to expression, expressed in kidney, lung, pancreas and spleen.

It is found in the cell membrane. Its subcellular location is the cytoplasm. It localises to the cytoplasmic vesicle. In terms of biological role, cell autonomous antagonist of the canonical Wnt signaling pathway. May activate a second Wnt signaling pathway that controls planar cell polarity. Required for processing of TGFA and for targeting of TGFA to the basolateral membrane of polarized epithelial cells. This chain is Protein naked cuticle homolog 2 (NKD2), found in Homo sapiens (Human).